Here is a 431-residue protein sequence, read N- to C-terminus: Isocitrate lyase (431 aa).

A disordered region spans residues 1-21; that stretch reads MSNVGTPRTAQEIQQDWDTNP. Position 93 to 95 (93 to 95) interacts with substrate; it reads SGW. Position 155 (D155) interacts with Mg(2+). The Proton acceptor role is filled by C193. Substrate is bound by residues 194 to 195, R230, 315 to 319, and T349; these read GH and NCSPS.

This sequence belongs to the isocitrate lyase/PEP mutase superfamily. Isocitrate lyase family. Homotetramer. Mg(2+) is required as a cofactor.

The enzyme catalyses D-threo-isocitrate = glyoxylate + succinate. It participates in carbohydrate metabolism; glyoxylate cycle; (S)-malate from isocitrate: step 1/2. In terms of biological role, involved in the metabolic adaptation in response to environmental changes. Catalyzes the reversible formation of succinate and glyoxylate from isocitrate, a key step of the glyoxylate cycle, which operates as an anaplerotic route for replenishing the tricarboxylic acid cycle during growth on fatty acid substrates. This chain is Isocitrate lyase (aceA), found in Corynebacterium efficiens (strain DSM 44549 / YS-314 / AJ 12310 / JCM 11189 / NBRC 100395).